A 428-amino-acid chain; its full sequence is U2 small nuclear ribonucleoprotein auxiliary factor 35 kDa subunit-related protein 2-like (428 aa).

The disordered stretch occupies residues 1 to 51; sequence MASRQTAIPEKLSRKQYKAAMKKEKRKKRRQKMARLRALEAPPEEDDDVSA. Over residues 23–35 the composition is skewed to basic residues; the sequence is KEKRKKRRQKMAR. A compositionally biased stretch (acidic residues) spans 42 to 51; the sequence is PPEEDDDVSA. S50 is modified (phosphoserine). Residues 157–185 form a C3H1-type 1 zinc finger; sequence EKYRPSCPFYNKTGACRFGNRCSRKHDFP. The region spanning 189-295 is the RRM domain; the sequence is PTLLVKSMFT…RQLQCEFCPV (107 aa). The segment at 297–324 adopts a C3H1-type 2 zinc-finger fold; the sequence is RWKVAICGLFEMQKCPKGKHCNFLHVFR. The disordered stretch occupies residues 339–428; the sequence is MSPPAWTGSS…PGPQSQSHRT (90 aa). The residue at position 340 (S340) is a Phosphoserine. Over residues 351 to 366 the composition is skewed to basic and acidic residues; the sequence is NSDRRERKDHHEEYYS. Low complexity predominate over residues 367-377; the sequence is KSRSYHSGSYH. At S375 the chain carries Phosphoserine. Over residues 389–410 the composition is skewed to basic residues; that stretch reads SPHRWKKSHKQTTKSHERHSSR. A compositionally biased stretch (polar residues) spans 419-428; it reads PGPQSQSHRT.

Interacts with SF3B1. Interacts with ZCRB1. Highest expression levels are detected in the brain, and lower expression levels in other tissues like epididymis, testis, bone marrow or muscle. In testis, expressed in both Sertoli and spermatogenic cell.

The protein localises to the nucleus. Plays a role in splicing of the U12-type introns. Implicated also in removal of U2 introns positioned adjacent to a U12 intron. This chain is U2 small nuclear ribonucleoprotein auxiliary factor 35 kDa subunit-related protein 2-like, found in Mus musculus (Mouse).